A 234-amino-acid chain; its full sequence is MTNQLIYKGKAKDIYSTKDENVIRTVYKDQATMLNGARKETIDGKGALNNQISSLIFEKLNKAGVVTHYIEQISKNEQLNKKVDIIPLEVVLRNVTAGSFSKRFGVEEGRVLETPIVEFYYKNDDLNDPFINDEHVKFLGIVNDEEIAYLKGETRRINELLKGWFAQIGLNLIDFKLEFGFDQEGTIILADEFSPDNCRLWDKNGNHMDKDVFRRDLGNLTDVYQVVLEKLIAL.

This sequence belongs to the SAICAR synthetase family.

The enzyme catalyses 5-amino-1-(5-phospho-D-ribosyl)imidazole-4-carboxylate + L-aspartate + ATP = (2S)-2-[5-amino-1-(5-phospho-beta-D-ribosyl)imidazole-4-carboxamido]succinate + ADP + phosphate + 2 H(+). It functions in the pathway purine metabolism; IMP biosynthesis via de novo pathway; 5-amino-1-(5-phospho-D-ribosyl)imidazole-4-carboxamide from 5-amino-1-(5-phospho-D-ribosyl)imidazole-4-carboxylate: step 1/2. In Streptococcus pyogenes serotype M18 (strain MGAS8232), this protein is Phosphoribosylaminoimidazole-succinocarboxamide synthase.